Here is a 187-residue protein sequence, read N- to C-terminus: V-type ATP synthase subunit E (187 aa).

This sequence belongs to the V-ATPase E subunit family.

Functionally, produces ATP from ADP in the presence of a proton gradient across the membrane. The sequence is that of V-type ATP synthase subunit E from Clostridioides difficile (strain 630) (Peptoclostridium difficile).